A 361-amino-acid chain; its full sequence is Chorismate synthase (361 aa).

Residues Arg-48 and Arg-54 each coordinate NADP(+). Residues 125 to 127, 238 to 239, Gly-278, 293 to 297, and Arg-319 contribute to the FMN site; these read RSS, NA, and KPTSS.

This sequence belongs to the chorismate synthase family. As to quaternary structure, homotetramer. Requires FMNH2 as cofactor.

It catalyses the reaction 5-O-(1-carboxyvinyl)-3-phosphoshikimate = chorismate + phosphate. Its pathway is metabolic intermediate biosynthesis; chorismate biosynthesis; chorismate from D-erythrose 4-phosphate and phosphoenolpyruvate: step 7/7. Its function is as follows. Catalyzes the anti-1,4-elimination of the C-3 phosphate and the C-6 proR hydrogen from 5-enolpyruvylshikimate-3-phosphate (EPSP) to yield chorismate, which is the branch point compound that serves as the starting substrate for the three terminal pathways of aromatic amino acid biosynthesis. This reaction introduces a second double bond into the aromatic ring system. The chain is Chorismate synthase from Yersinia pseudotuberculosis serotype IB (strain PB1/+).